Here is a 76-residue protein sequence, read N- to C-terminus: Protein sprouty homolog 1 (76 aa).

Residues Asn-1–Cys-52 form the SPR domain.

Belongs to the sprouty family. In terms of tissue distribution, brain and interlimb region.

The protein localises to the cytoplasm. The protein resides in the membrane. Inhibits fibroblast growth factor (FGF)-induced retinal lens fiber differentiation. Inhibits TGFB-induced epithelial-to-mesenchymal transition in lens epithelial cells. This chain is Protein sprouty homolog 1 (SPRY1), found in Gallus gallus (Chicken).